The chain runs to 92 residues: UPF0223 protein Sez_0908 (92 aa).

This sequence belongs to the UPF0223 family.

The chain is UPF0223 protein Sez_0908 from Streptococcus equi subsp. zooepidemicus (strain MGCS10565).